Consider the following 295-residue polypeptide: Very long chain fatty acid elongase 5 (295 aa).

A run of 7 helical transmembrane segments spans residues 26–46 (WLLL…LFIV), 64–84 (ILVV…YELV), 112–132 (VLWW…FFIL), 150–170 (MLNI…YFGA), 175–192 (FIHV…IPAM), 207–223 (LTQF…AMIW), and 227–247 (FPMG…ILFG). The tract at residues 265–295 (YQNGSASAVNGHTNSFSSLEDNVKQRKQRQD) is disordered. A compositionally biased stretch (polar residues) spans 266–284 (QNGSASAVNGHTNSFSSLE). A compositionally biased stretch (basic and acidic residues) spans 285 to 295 (DNVKQRKQRQD).

It belongs to the ELO family. ELOVL5 subfamily.

It localises to the endoplasmic reticulum membrane. The protein resides in the cell projection. The protein localises to the dendrite. It carries out the reaction a very-long-chain acyl-CoA + malonyl-CoA + H(+) = a very-long-chain 3-oxoacyl-CoA + CO2 + CoA. It catalyses the reaction (6Z,9Z,12Z)-octadecatrienoyl-CoA + malonyl-CoA + H(+) = (8Z,11Z,14Z)-3-oxoeicosatrienoyl-CoA + CO2 + CoA. The enzyme catalyses (9Z,12Z,15Z)-octadecatrienoyl-CoA + malonyl-CoA + H(+) = (11Z,14Z,17Z)-3-oxoeicosatrienoyl-CoA + CO2 + CoA. The catalysed reaction is (9Z)-hexadecenoyl-CoA + malonyl-CoA + H(+) = 3-oxo-(11Z)-octadecenoyl-CoA + CO2 + CoA. It carries out the reaction (9Z)-octadecenoyl-CoA + malonyl-CoA + H(+) = 3-oxo-(11Z)-eicosenoyl-CoA + CO2 + CoA. It catalyses the reaction (11Z)-octadecenoyl-CoA + malonyl-CoA + H(+) = 3-oxo-(13Z)-eicosenoyl-CoA + CO2 + CoA. The enzyme catalyses (9Z,12Z)-octadecadienoyl-CoA + malonyl-CoA + H(+) = (11Z,14Z)-3-oxoicosa-11,14-dienoyl-CoA + CO2 + CoA. The catalysed reaction is (6Z,9Z,12Z,15Z)-octadecatetraenoyl-CoA + malonyl-CoA + H(+) = (8Z,11Z,14Z,17Z)-3-oxoicosatetraenoyl-CoA + CO2 + CoA. It carries out the reaction (5Z,8Z,11Z,14Z)-eicosatetraenoyl-CoA + malonyl-CoA + H(+) = (7Z,10Z,13Z,16Z)-3-oxodocosatetraenoyl-CoA + CO2 + CoA. It catalyses the reaction (5Z,8Z,11Z,14Z,17Z)-eicosapentaenoyl-CoA + malonyl-CoA + H(+) = 3-oxo-(7Z,10Z,13Z,16Z,19Z)-docosapentaenoyl-CoA + CO2 + CoA. It participates in lipid metabolism; polyunsaturated fatty acid biosynthesis. Functionally, catalyzes the first and rate-limiting reaction of the four reactions that constitute the long-chain fatty acids elongation cycle. This endoplasmic reticulum-bound enzymatic process allows the addition of 2 carbons to the chain of long- and very long-chain fatty acids (VLCFAs) per cycle. Condensing enzyme that acts specifically toward polyunsaturated acyl-CoA with the higher activity toward C18:3(n-6) acyl-CoA. May participate in the production of monounsaturated and of polyunsaturated VLCFAs of different chain lengths that are involved in multiple biological processes as precursors of membrane lipids and lipid mediators. In conditions where the essential linoleic and alpha linoleic fatty acids are lacking it is also involved in the synthesis of Mead acid from oleic acid. The protein is Very long chain fatty acid elongase 5 of Xenopus tropicalis (Western clawed frog).